A 166-amino-acid polypeptide reads, in one-letter code: MFPMVTEFMNYGQQTIRAARYIGQGFMITLSHANRLPVTIQYPYEKLITSERFRGRIHFEFDKCIACEVCVRVCPMDLPVVDWKLETDIRKKRLLNYSIDFGICIFCGNCVEYCPTNCLSMTEEYELSTYDRHELNYNQIALGRLPMSIIDDYTIRTILNLPEIKT.

4Fe-4S ferredoxin-type domains lie at 55 to 84 and 95 to 124; these read GRIH…VDWK and LNYS…MTEE. The [4Fe-4S] cluster site is built by Cys64, Cys67, Cys70, Cys74, Cys104, Cys107, Cys110, and Cys114.

The protein belongs to the complex I 23 kDa subunit family. NDH is composed of at least 16 different subunits, 5 of which are encoded in the nucleus. [4Fe-4S] cluster is required as a cofactor.

The protein resides in the plastid. It localises to the chloroplast thylakoid membrane. The catalysed reaction is a plastoquinone + NADH + (n+1) H(+)(in) = a plastoquinol + NAD(+) + n H(+)(out). The enzyme catalyses a plastoquinone + NADPH + (n+1) H(+)(in) = a plastoquinol + NADP(+) + n H(+)(out). NDH shuttles electrons from NAD(P)H:plastoquinone, via FMN and iron-sulfur (Fe-S) centers, to quinones in the photosynthetic chain and possibly in a chloroplast respiratory chain. The immediate electron acceptor for the enzyme in this species is believed to be plastoquinone. Couples the redox reaction to proton translocation, and thus conserves the redox energy in a proton gradient. In Steiractinia sodiroi, this protein is NAD(P)H-quinone oxidoreductase subunit I, chloroplastic.